The chain runs to 178 residues: CDP-archaeol synthase (178 aa).

The next 5 membrane-spanning stretches (helical) occupy residues 3–23, 56–76, 87–107, 123–145, and 150–169; these read LLLL…ANAV, FFGI…VILY, LFGY…GDML, APIL…FYPL, and IVLL…IIAY.

It belongs to the CDP-archaeol synthase family. Mg(2+) serves as cofactor.

The protein resides in the cell membrane. It catalyses the reaction 2,3-bis-O-(geranylgeranyl)-sn-glycerol 1-phosphate + CTP + H(+) = CDP-2,3-bis-O-(geranylgeranyl)-sn-glycerol + diphosphate. Its pathway is membrane lipid metabolism; glycerophospholipid metabolism. Catalyzes the formation of CDP-2,3-bis-(O-geranylgeranyl)-sn-glycerol (CDP-archaeol) from 2,3-bis-(O-geranylgeranyl)-sn-glycerol 1-phosphate (DGGGP) and CTP. This reaction is the third ether-bond-formation step in the biosynthesis of archaeal membrane lipids. The sequence is that of CDP-archaeol synthase from Methanococcus maripaludis (strain C6 / ATCC BAA-1332).